Consider the following 1403-residue polypeptide: Eukaryotic translation initiation factor 4 gamma (1403 aa).

Polar residues-rich tracts occupy residues 1-11 (MSSKPPSNTPK), 19-39 (ASSQ…TATA), and 50-60 (EPTNTSRANAQ). Disordered regions lie at residues 1–381 (MSSK…GSTP), 439–464 (SRSG…RNGF), 488–774 (VVVP…KRDL), and 861–1003 (AFSD…EALL). Serine 83 is subject to Phosphoserine. Residues 109-137 (DNTSKPSANSSAERTSSQHQKPETSSQIG) show a composition bias toward polar residues. Composition is skewed to low complexity over residues 190–208 (SGVS…SVTS) and 231–248 (PRPT…ANGA). The span at 249 to 269 (PTNKPSTDINTTDPATQTTQV) shows a compositional bias: polar residues. The span at 270–291 (SASNSPALSGSSTPSNTSSRSN) shows a compositional bias: low complexity. Residues 298 to 308 (FSEKRHYDRYG) are compositionally biased toward basic and acidic residues. A compositionally biased stretch (low complexity) spans 325 to 334 (NYNNSGNNRN). 3 stretches are compositionally biased toward polar residues: residues 346-381 (RNYN…GSTP), 439-460 (SRSG…TLSP), and 493-508 (KNAS…SRAE). Phosphoserine occurs at positions 452, 455, 456, and 459. A compositionally biased stretch (basic and acidic residues) spans 537-714 (IQEKAEAEAK…GKREADKNPE (178 aa)). Residues 720–737 (PLASSEANVDTSKQTNAT) show a composition bias toward polar residues. The span at 741 to 754 (VVDKTKVEKLKASE) shows a compositional bias: basic and acidic residues. The span at 757-768 (STSSLSSPSHST) shows a compositional bias: low complexity. 2 positions are modified to phosphoserine: serine 866 and serine 882. Over residues 868 to 886 (RGMYSSSRQSSRSGSNTHS) the composition is skewed to low complexity. Position 884 is a phosphothreonine (threonine 884). Phosphoserine occurs at positions 886, 911, 919, and 921. Tyrosine 923 bears the Phosphotyrosine mark. Basic and acidic residues predominate over residues 986-995 (KLTEKPAETK). The 237-residue stretch at 1009 to 1245 (QRKVKGSLNK…MDVMDSRKNG (237 aa)) folds into the MIF4G domain. Positions 1266–1403 (AERKKALAES…QKDSNSKTSS (138 aa)) are disordered. Residues 1284–1295 (HGRDMNRGDSRM) show a composition bias toward basic and acidic residues. Polar residues-rich tracts occupy residues 1302–1313 (PPFSSSDWSNNK), 1328–1341 (SGTQ…SLSS), and 1348–1358 (VSRTPSRQNSA). At serine 1333 the chain carries Phosphoserine. The span at 1383–1403 (LEEHDHDNDGGQKDSNSKTSS) shows a compositional bias: basic and acidic residues.

This sequence belongs to the eukaryotic initiation factor 4G family.

It is found in the cytoplasm. The protein localises to the perinuclear region. Functionally, component of the protein complex eIF4F, which is involved in the recognition of the mRNA cap, ATP-dependent unwinding of 5'-terminal secondary structure and recruitment of mRNA to the ribosome. The polypeptide is Eukaryotic translation initiation factor 4 gamma (tif471) (Schizosaccharomyces pombe (strain 972 / ATCC 24843) (Fission yeast)).